The primary structure comprises 335 residues: MRPILLSGHERSLNQIKFNRDGDLLFSVAKDKIVCAWWSANGERLGTYNGHQGAIWTVDVSPNTVLLATGSADNTVRLWNVKTGECIKVWDFPTAVKRVEFTPDGSRLLAVTEKRMGFLGTIAVLDINYEDLEAQAEEPSLRITCTESKATVAGWSYLAKYIIAGHEDGSVSQYDSKTGEQLENVQAHEFDNLISDIQFSADRTYFITASKDKSAKLISSRNLAILKTYVADTPLNSAAITPKKEYVILGGGQAAMDVTTTSARQGKFEARFYHKVFEDEIGRVRGHFGPLNTVAVHPNGTAYASGGEDGYVRVHHFDKPYFDFMYEVEREQLRK.

WD repeat units lie at residues 8 to 47, 50 to 91, 145 to 184, 189 to 228, and 286 to 325; these read GHERSLNQIKFNRDGDLLFSVAKDKIVCAWWSANGERLGT, GHQG…KVWD, CTESKATVAGWSYLAKYIIAGHEDGSVSQYDSKTGEQLEN, EFDNLISDIQFSADRTYFITASKDKSAKLISSRNLAILKT, and GHFGPLNTVAVHPNGTAYASGGEDGYVRVHHFDKPYFDFM.

It belongs to the eIF-3 subunit I family. Component of the eukaryotic translation initiation factor 3 (eIF-3) complex.

It localises to the cytoplasm. In terms of biological role, component of the eukaryotic translation initiation factor 3 (eIF-3) complex, which is involved in protein synthesis of a specialized repertoire of mRNAs and, together with other initiation factors, stimulates binding of mRNA and methionyl-tRNAi to the 40S ribosome. The eIF-3 complex specifically targets and initiates translation of a subset of mRNAs involved in cell proliferation. The chain is Eukaryotic translation initiation factor 3 subunit I (tif34) from Aspergillus oryzae (strain ATCC 42149 / RIB 40) (Yellow koji mold).